A 400-amino-acid chain; its full sequence is 2-[(L-alanin-3-ylcarbamoyl)methyl]-2-hydroxybutanedioate decarboxylase (400 aa).

N6-(pyridoxal phosphate)lysine is present on lysine 50. Pyridoxal 5'-phosphate is bound by residues glycine 228 and 266 to 269; that span reads ECGR. The active-site Proton donor is cysteine 344. Residue tyrosine 373 participates in pyridoxal 5'-phosphate binding.

It belongs to the Orn/Lys/Arg decarboxylase class-II family. As to quaternary structure, homodimer. Pyridoxal 5'-phosphate serves as cofactor.

The enzyme catalyses 2-[(L-alanin-3-ylcarbamoyl)methyl]-2-hydroxybutanedioate + H(+) = 2-[(2-aminoethylcarbamoyl)methyl]-2-hydroxybutanedioate + CO2. The protein operates within siderophore biosynthesis. Catalyzes the decarboxylation of citryl-L-2,3-diaminopropionic acid to citryl-diaminoethane, the second step in staphyloferrin B biosynthesis. The protein is 2-[(L-alanin-3-ylcarbamoyl)methyl]-2-hydroxybutanedioate decarboxylase of Staphylococcus aureus (strain NCTC 8325 / PS 47).